A 1218-amino-acid polypeptide reads, in one-letter code: Sodium bicarbonate cotransporter 3 (1218 aa).

2 disordered regions span residues 1–31 (MEAD…KTSS) and 53–99 (HVPF…SQRV). The Extracellular segment spans residues 1 to 612 (MEADGAGEQM…DFKDALSLQC (612 aa)). A phosphoserine mark is found at Ser-57, Ser-60, Ser-89, and Ser-155. Basic residues predominate over residues 60–77 (SRRRHRHRGHKHHHRRRK). Positions 78-90 (DKDSDKEDGRESP) are enriched in basic and acidic residues. An N-linked (GlcNAc...) asparagine glycan is attached at Asn-176. A phosphoserine mark is found at Ser-238, Ser-247, and Arg-263. A glycan (N-linked (GlcNAc...) asparagine) is linked at Asn-274. 3 disordered regions span residues 294 to 350 (SRAG…DIPR), 364 to 412 (KGQE…ENST), and 536 to 577 (SIRI…HAGP). Residues 308 to 318 (VPTPQNSPPSS) are compositionally biased toward pro residues. The segment covering 319–337 (PSLSRLTSRSSQQTQPQAP) has biased composition (low complexity). A compositionally biased stretch (polar residues) spans 383 to 396 (SPQSAPGNLDSSKS). Ser-386, Ser-404, and Ser-407 each carry phosphoserine. Asn-410 carries N-linked (GlcNAc...) asparagine glycosylation. Residues Ser-411 and Ser-560 each carry the phosphoserine modification. Residues 567–576 (PPKEADHHAG) are compositionally biased toward basic and acidic residues. A helical transmembrane segment spans residues 613–633 (LASILFLYCACMSPVITFGGL). At 634–641 (LGEATEGR) the chain is on the cytoplasmic side. The chain crosses the membrane as a helical span at residues 642-662 (ISAIESLFGASLTGIAYSLFA). Topologically, residues 663 to 699 (GQPLTILGSTGPVLVFEKILFKFCRDYHLSYLSLRTS) are extracellular. A helical membrane pass occupies residues 700-720 (IGLWTSFLCIVLVATDASSLV). At 721–729 (CYITRFTEE) the chain is on the cytoplasmic side. Residues 730–750 (AFAALICIIFIYEALEKLFHL) form a helical membrane-spanning segment. At 751-821 (GEIYAFNMHN…MFVGSACGPH (71 aa)) the chain is on the extracellular side. Cys-770 and Cys-772 form a disulfide bridge. 3 N-linked (GlcNAc...) asparagine glycosylation sites follow: Asn-780, Asn-790, and Asn-800. Cys-806 and Cys-818 are joined by a disulfide. The chain crosses the membrane as a helical span at residues 822–842 (GPYVPDVLFWCVVLFFTTFFL). At 843 to 865 (SSFLKQFKTKRYFPTKVRSTISD) the chain is on the cytoplasmic side. Residues 866 to 886 (FAVFLTIVIMVAIDYLVGIPS) traverse the membrane as a helical segment. The Extracellular segment spans residues 887–912 (PKLHVPEKFEPTDPSRGWIISPLGDN). Residues 913–933 (PWWTLLIAAVPALLCTILIFM) traverse the membrane as a helical segment. The Cytoplasmic portion of the chain corresponds to 934–958 (DQQITAVIINRKEHKLKKGAGYHLD). A helical membrane pass occupies residues 959-979 (LLMVAVMLGVCSIMGLPWFVA). The Extracellular segment spans residues 980 to 1015 (ATVLSISHVNSLKVESECSAPGEQPKFLGIREQRVT). The essential for cell membrane localization and transport activity stretch occupies residues 1012–1135 (QRVTGLMIFI…MDLCFTKREL (124 aa)). The chain crosses the membrane as a helical span at residues 1016-1036 (GLMIFILMGLSVFMTSVLKFI). The Cytoplasmic portion of the chain corresponds to 1037–1038 (PM). A helical membrane pass occupies residues 1039-1059 (PVLYGVFLYMGVSSLKGIQFF). The Extracellular segment spans residues 1060 to 1096 (DRIKLFGMPAKHQPDLIYLRYVPLWKVHVFTVVQLTC). Met-1067 and Leu-1078 each carry phosphoserine. The helical transmembrane segment at 1097-1117 (LVLLWVIKASAAAVVFPMMVL) threads the bilayer. An essential for interaction with RACK1 region spans residues 1118–1140 (ALVFVRKLMDLCFTKRELSWLDD). At 1118–1218 (ALVFVRKLMD…KKYMDAETSL (101 aa)) the chain is on the cytoplasmic side. The segment at 1138–1140 (LDD) is CA2-binding. Basic and acidic residues predominate over residues 1148–1165 (KKEDDKKKKEKEEAERML). The interval 1148-1172 (KKEDDKKKKEKEEAERMLQGDGDTV) is disordered. Thr-1171 is subject to Phosphothreonine. Phosphoserine occurs at positions 1180, 1188, 1201, and 1217. The short motif at 1215–1218 (ETSL) is the PDZ-binding element.

This sequence belongs to the anion exchanger (TC 2.A.31) family. As to quaternary structure, interacts with USH1C. Forms a complex with ATP6V1B1 and NHERF1/EBP50. Interacts in a pH dependent-manner with CA2/carbonic anhydrase 2. Interacts with CFTR probably through NHERF1/EBP50. Interacts with RACK1. In terms of processing, undergoes lysosome-mediated degradation. N-glycosylated. As to expression, expressed in aorta, ventricles, atrium, mesenteric artery, kidney, spleen, duodenum, jejunum, ileum, colon, lung, trachea, gastric fundus and pylorus, cerebrum, cerebellum, pancreas, liver, parotid gland, and epididymis. Expressed in the inner ear by cochlear outer and inner hair cells (at protein level). Highly expressed in testis and spleen. Specifically expressed in kidney. In terms of tissue distribution, specifically expressed in hippocampal neurons.

It is found in the basolateral cell membrane. The protein localises to the apical cell membrane. The protein resides in the cell projection. Its subcellular location is the stereocilium. It localises to the cell membrane. The catalysed reaction is hydrogencarbonate(in) + Na(+)(in) = hydrogencarbonate(out) + Na(+)(out). Its activity is regulated as follows. Insensitive to stilbene derivatives. Functionally, electroneutral sodium- and bicarbonate-dependent cotransporter with a Na(+):HCO3(-) 1:1 stoichiometry. Mediates the sodium-dependent bicarbonate transport important for pH recovery after acid load as well as for regulation of steady-state pH in the duodenum and vascular smooth muscle cells. Plays a key role in macrophage acidification, mediating bicarbonate import into the cytoplasm which is crucial for net acid extrusion and maintenance of cytoplasmic pH during phagocytosis. Provides cellular bicarbonate for de novo purine and pyrimidine synthesis and is a key mediator of de novo nucleotide synthesis downstream of mTORC1 signaling in proliferating cells. This Rattus norvegicus (Rat) protein is Sodium bicarbonate cotransporter 3 (Slc4a7).